Reading from the N-terminus, the 95-residue chain is Small ribosomal subunit protein bS6 (95 aa).

This sequence belongs to the bacterial ribosomal protein bS6 family.

Its function is as follows. Binds together with bS18 to 16S ribosomal RNA. In Rhodococcus jostii (strain RHA1), this protein is Small ribosomal subunit protein bS6.